The chain runs to 530 residues: CTP synthase (530 aa).

The interval 1-264 (MPKLIIVTGG…GDFLTRRLRL (264 aa)) is amidoligase domain. Ser13 contacts CTP. Ser13 provides a ligand contact to UTP. ATP is bound at residue 14–19 (GVGKGV). L-glutamine is bound at residue Tyr54. Asp71 is a binding site for ATP. 2 residues coordinate Mg(2+): Asp71 and Glu139. CTP is bound by residues 146–148 (DYE), 185–190 (KTKPLQ), and Lys221. UTP is bound by residues 185-190 (KTKPLQ) and Lys221. The region spanning 289-530 (SVGMCGKYVE…LLKAALFAKR (242 aa)) is the Glutamine amidotransferase type-1 domain. Residue Gly351 participates in L-glutamine binding. Residue Cys378 is the Nucleophile; for glutamine hydrolysis of the active site. L-glutamine is bound by residues 379 to 382 (FGMQ), Glu402, and Arg459. Active-site residues include His504 and Glu506.

This sequence belongs to the CTP synthase family. As to quaternary structure, homotetramer.

The catalysed reaction is UTP + L-glutamine + ATP + H2O = CTP + L-glutamate + ADP + phosphate + 2 H(+). It carries out the reaction L-glutamine + H2O = L-glutamate + NH4(+). It catalyses the reaction UTP + NH4(+) + ATP = CTP + ADP + phosphate + 2 H(+). The protein operates within pyrimidine metabolism; CTP biosynthesis via de novo pathway; CTP from UDP: step 2/2. With respect to regulation, allosterically activated by GTP, when glutamine is the substrate; GTP has no effect on the reaction when ammonia is the substrate. The allosteric effector GTP functions by stabilizing the protein conformation that binds the tetrahedral intermediate(s) formed during glutamine hydrolysis. Inhibited by the product CTP, via allosteric rather than competitive inhibition. Catalyzes the ATP-dependent amination of UTP to CTP with either L-glutamine or ammonia as the source of nitrogen. Regulates intracellular CTP levels through interactions with the four ribonucleotide triphosphates. In Pyrobaculum aerophilum (strain ATCC 51768 / DSM 7523 / JCM 9630 / CIP 104966 / NBRC 100827 / IM2), this protein is CTP synthase.